A 365-amino-acid chain; its full sequence is Putative outer membrane porin protein NmpC (365 aa).

Residues 1-23 (MKKLTVAISAVAASVLMAMSAQA) form the signal peptide.

It belongs to the Gram-negative porin family. As to quaternary structure, homotrimer.

It localises to the cell outer membrane. This Escherichia coli (strain K12) protein is Putative outer membrane porin protein NmpC (nmpC).